We begin with the raw amino-acid sequence, 92 residues long: DNA-binding protein HU-alpha (92 aa).

This sequence belongs to the bacterial histone-like protein family. As to quaternary structure, heterodimer of an alpha and a beta chain.

Histone-like DNA-binding protein which is capable of wrapping DNA to stabilize it, and thus to prevent its denaturation under extreme environmental conditions. This chain is DNA-binding protein HU-alpha (hupA), found in Burkholderia pseudomallei (strain K96243).